Reading from the N-terminus, the 613-residue chain is DBH-like monooxygenase protein 1 (613 aa).

A signal peptide spans Met-1 to Gly-19. The Lumenal portion of the chain corresponds to Ser-20–Pro-587. A DOMON domain is found at Gly-35–His-148. Residue Asn-114 is glycosylated (N-linked (GlcNAc...) asparagine). Tyr-203 is a catalytic residue. 2 disulfides stabilise this stretch: Cys-205–Cys-257 and Cys-242–Cys-269. Cu cation is bound by residues His-235 and His-236. The N-linked (GlcNAc...) asparagine glycan is linked to Asn-247. Residues His-307, His-389, His-391, and Met-464 each contribute to the Cu cation site. Disulfide bonds link Cys-364–Cys-480, Cys-368–Cys-550, and Cys-443–Cys-465. Residue His-389 is part of the active site. N-linked (GlcNAc...) asparagine glycosylation is found at Asn-476 and Asn-517. A helical membrane pass occupies residues Pro-588 to Leu-608.

It belongs to the copper type II ascorbate-dependent monooxygenase family. It depends on Cu(2+) as a cofactor. Post-translationally, N-glycosylated. In terms of tissue distribution, broadly exprressed, with highest levels in salivary gland and ovary.

It localises to the endoplasmic reticulum membrane. This chain is DBH-like monooxygenase protein 1 (Moxd1), found in Mus musculus (Mouse).